A 457-amino-acid polypeptide reads, in one-letter code: tRNA modification GTPase MnmE (457 aa).

(6S)-5-formyl-5,6,7,8-tetrahydrofolate-binding residues include arginine 25, glutamate 87, and arginine 126. Residues glycine 223–phenylalanine 377 form the TrmE-type G domain. Asparagine 233 is a binding site for K(+). Residues asparagine 233–serine 238, threonine 252–threonine 258, and aspartate 277–glycine 280 each bind GTP. Serine 237 contributes to the Mg(2+) binding site. Residues threonine 252, isoleucine 254, and threonine 257 each contribute to the K(+) site. Threonine 258 contacts Mg(2+). Lysine 457 contributes to the (6S)-5-formyl-5,6,7,8-tetrahydrofolate binding site.

Belongs to the TRAFAC class TrmE-Era-EngA-EngB-Septin-like GTPase superfamily. TrmE GTPase family. Homodimer. Heterotetramer of two MnmE and two MnmG subunits. Requires K(+) as cofactor.

Its subcellular location is the cytoplasm. Exhibits a very high intrinsic GTPase hydrolysis rate. Involved in the addition of a carboxymethylaminomethyl (cmnm) group at the wobble position (U34) of certain tRNAs, forming tRNA-cmnm(5)s(2)U34. In Streptococcus sanguinis (strain SK36), this protein is tRNA modification GTPase MnmE.